The chain runs to 134 residues: Cytochrome b5 (134 aa).

Residues 6-82 (VKYFTRAEVA…MKQYKVGELV (77 aa)) form the Cytochrome b5 heme-binding domain. The heme site is built by His-41 and His-65. Residues 111–131 (WLMPFVLGLVATLIYKFFFGT) traverse the membrane as a helical segment.

The protein belongs to the cytochrome b5 family.

Its subcellular location is the endoplasmic reticulum membrane. It is found in the microsome membrane. Cytochrome b5 is a membrane bound hemoprotein which function as an electron carrier for several membrane bound oxygenases. This is Cytochrome b5 (Cyt-b5) from Musca domestica (House fly).